The primary structure comprises 221 residues: Protein GrpE (221 aa).

The tract at residues 1–43 is disordered; that stretch reads MFTNPFGRKKDMSDDQKKNNQPDTEADNAENIKFAADDTELRA. The span at 8-20 shows a compositional bias: basic and acidic residues; it reads RKKDMSDDQKKNN.

This sequence belongs to the GrpE family. In terms of assembly, homodimer.

It localises to the cytoplasm. Functionally, participates actively in the response to hyperosmotic and heat shock by preventing the aggregation of stress-denatured proteins, in association with DnaK and GrpE. It is the nucleotide exchange factor for DnaK and may function as a thermosensor. Unfolded proteins bind initially to DnaJ; upon interaction with the DnaJ-bound protein, DnaK hydrolyzes its bound ATP, resulting in the formation of a stable complex. GrpE releases ADP from DnaK; ATP binding to DnaK triggers the release of the substrate protein, thus completing the reaction cycle. Several rounds of ATP-dependent interactions between DnaJ, DnaK and GrpE are required for fully efficient folding. The sequence is that of Protein GrpE from Deinococcus radiodurans (strain ATCC 13939 / DSM 20539 / JCM 16871 / CCUG 27074 / LMG 4051 / NBRC 15346 / NCIMB 9279 / VKM B-1422 / R1).